Consider the following 464-residue polypeptide: Protein FAM90A8 (464 aa).

Disordered stretches follow at residues 1-42, 69-389, and 415-437; these read MMAR…DPRL, VPAT…HDGA, and HSPE…SEAP. 2 stretches are compositionally biased toward basic and acidic residues: residues 74–89 and 97–114; these read GKKE…KPRG and NKDK…DPQR. Residues 180 to 197 show a composition bias toward low complexity; it reads LASLSPLRKASLSSSSSL.

This sequence belongs to the FAM90 family.

The polypeptide is Protein FAM90A8 (FAM90A8) (Homo sapiens (Human)).